The primary structure comprises 589 residues: Sentrin-specific protease 2 (589 aa).

The Nuclear localization signal signature appears at 28–31; the sequence is KRRR. Position 32 is a phosphoserine (serine 32). The Nuclear localization signal motif lies at 46–51; that stretch reads PAKRPR. An axin-binding region spans residues 71-382; it reads GFPFQLTTKP…EKEISNALGH (312 aa). Disordered stretches follow at residues 148–179 and 191–210; these read SFGF…LMWK and EESG…GVQK. Positions 317-332 match the Nuclear export signal motif; that stretch reads LEPDLSEEVSARLRLG. Phosphoserine is present on residues serine 333 and serine 344. The interval 395 to 559 is protease; the sequence is LRITRGDIQT…MFTCKYADYI (165 aa). Residues histidine 478 and aspartate 495 contribute to the active site. Cysteine 548 acts as the Nucleophile in catalysis.

Belongs to the peptidase C48 family. Binds to SUMO2 and SUMO3. Interacts with the C-terminal domain of NUP153 via its N-terminus. Interacts with MTA1. In terms of processing, polyubiquitinated; which leads to proteasomal degradation.

It is found in the nucleus. It localises to the nuclear pore complex. Its subcellular location is the nucleus membrane. The protein localises to the cytoplasm. Functionally, protease that catalyzes two essential functions in the SUMO pathway. The first is the hydrolysis of an alpha-linked peptide bond at the C-terminal end of the small ubiquitin-like modifier (SUMO) propeptides, SUMO1, SUMO2 and SUMO3 leading to the mature form of the proteins. The second is the deconjugation of SUMO1, SUMO2 and SUMO3 from targeted proteins, by cleaving an epsilon-linked peptide bond between the C-terminal glycine of the mature SUMO and the lysine epsilon-amino group of the target protein. May down-regulate CTNNB1 levels and thereby modulate the Wnt pathway. Deconjugates SUMO2 from MTA1. Plays a dynamic role in adipogenesis by desumoylating and promoting the stabilization of CEBPB. Acts as a regulator of the cGAS-STING pathway by catalyzing desumoylation of CGAS and STING1 during the late phase of viral infection. The polypeptide is Sentrin-specific protease 2 (SENP2) (Pongo abelii (Sumatran orangutan)).